The following is a 245-amino-acid chain: Phosphoribosylaminoimidazole-succinocarboxamide synthase (245 aa).

It belongs to the SAICAR synthetase family.

The enzyme catalyses 5-amino-1-(5-phospho-D-ribosyl)imidazole-4-carboxylate + L-aspartate + ATP = (2S)-2-[5-amino-1-(5-phospho-beta-D-ribosyl)imidazole-4-carboxamido]succinate + ADP + phosphate + 2 H(+). It functions in the pathway purine metabolism; IMP biosynthesis via de novo pathway; 5-amino-1-(5-phospho-D-ribosyl)imidazole-4-carboxamide from 5-amino-1-(5-phospho-D-ribosyl)imidazole-4-carboxylate: step 1/2. This chain is Phosphoribosylaminoimidazole-succinocarboxamide synthase, found in Trichormus variabilis (strain ATCC 29413 / PCC 7937) (Anabaena variabilis).